The chain runs to 433 residues: Serine--tRNA ligase (433 aa).

235 to 237 (TSE) provides a ligand contact to L-serine. 266–268 (RSE) lines the ATP pocket. Residue E289 participates in L-serine binding. 353–356 (EISS) lines the ATP pocket. Residue S388 coordinates L-serine.

Belongs to the class-II aminoacyl-tRNA synthetase family. Type-1 seryl-tRNA synthetase subfamily. Homodimer. The tRNA molecule binds across the dimer.

It is found in the cytoplasm. It catalyses the reaction tRNA(Ser) + L-serine + ATP = L-seryl-tRNA(Ser) + AMP + diphosphate + H(+). The catalysed reaction is tRNA(Sec) + L-serine + ATP = L-seryl-tRNA(Sec) + AMP + diphosphate + H(+). Its pathway is aminoacyl-tRNA biosynthesis; selenocysteinyl-tRNA(Sec) biosynthesis; L-seryl-tRNA(Sec) from L-serine and tRNA(Sec): step 1/1. Functionally, catalyzes the attachment of serine to tRNA(Ser). Is also able to aminoacylate tRNA(Sec) with serine, to form the misacylated tRNA L-seryl-tRNA(Sec), which will be further converted into selenocysteinyl-tRNA(Sec). This chain is Serine--tRNA ligase, found in Burkholderia cepacia (Pseudomonas cepacia).